We begin with the raw amino-acid sequence, 161 residues long: Protein-export protein SecB (161 aa).

Belongs to the SecB family. In terms of assembly, homotetramer, a dimer of dimers. One homotetramer interacts with 1 SecA dimer.

It localises to the cytoplasm. One of the proteins required for the normal export of preproteins out of the cell cytoplasm. It is a molecular chaperone that binds to a subset of precursor proteins, maintaining them in a translocation-competent state. It also specifically binds to its receptor SecA. This chain is Protein-export protein SecB, found in Shewanella baltica (strain OS155 / ATCC BAA-1091).